The following is a 190-amino-acid chain: Somatotropin (190 aa).

A Zn(2+)-binding site is contributed by H19. An intrachain disulfide couples C52 to C163. Position 105 is a phosphoserine (S105). E172 is a binding site for Zn(2+). Residues C180 and C188 are joined by a disulfide bond.

It belongs to the somatotropin/prolactin family.

The protein localises to the secreted. In terms of biological role, plays an important role in growth control. Its major role in stimulating body growth is to stimulate the liver and other tissues to secrete IGF1. It stimulates both the differentiation and proliferation of myoblasts. It also stimulates amino acid uptake and protein synthesis in muscle and other tissues. The chain is Somatotropin (GH1) from Vulpes vulpes (Red fox).